We begin with the raw amino-acid sequence, 429 residues long: Tryptophan synthase beta chain 2 (429 aa).

The interval 18-40 (NINPDLPSPLPEPKNPEGGKNIE) is disordered. The residue at position 110 (K110) is an N6-(pyridoxal phosphate)lysine.

It belongs to the TrpB family. As to quaternary structure, tetramer of two alpha and two beta chains. The cofactor is pyridoxal 5'-phosphate.

The catalysed reaction is (1S,2R)-1-C-(indol-3-yl)glycerol 3-phosphate + L-serine = D-glyceraldehyde 3-phosphate + L-tryptophan + H2O. It functions in the pathway amino-acid biosynthesis; L-tryptophan biosynthesis; L-tryptophan from chorismate: step 5/5. Functionally, the beta subunit is responsible for the synthesis of L-tryptophan from indole and L-serine. The sequence is that of Tryptophan synthase beta chain 2 (trpB2) from Methanothermobacter thermautotrophicus (strain ATCC 29096 / DSM 1053 / JCM 10044 / NBRC 100330 / Delta H) (Methanobacterium thermoautotrophicum).